The sequence spans 1373 residues: DNA-directed RNA polymerase subunit beta (1373 aa).

This sequence belongs to the RNA polymerase beta chain family. As to quaternary structure, the RNAP catalytic core consists of 2 alpha, 1 beta, 1 beta' and 1 omega subunit. When a sigma factor is associated with the core the holoenzyme is formed, which can initiate transcription.

The enzyme catalyses RNA(n) + a ribonucleoside 5'-triphosphate = RNA(n+1) + diphosphate. In terms of biological role, DNA-dependent RNA polymerase catalyzes the transcription of DNA into RNA using the four ribonucleoside triphosphates as substrates. In Rickettsia peacockii (strain Rustic), this protein is DNA-directed RNA polymerase subunit beta.